A 1872-amino-acid polypeptide reads, in one-letter code: Histone acetyltransferase KAT6B (1872 aa).

In terms of domain architecture, SAMD1-like winged helix (WH) spans 1-77; the sequence is MVKLANPLYT…LASYKDPDNP (77 aa). Disordered regions lie at residues 70-103 and 168-207; these read SYKDPDNPGRFSSVKPGTFPKPTKGSKGPPCNDL and KEGPQYRVNSGSSDGKGAPQYPSAFPSSLPPVSLLPHEKD. An H15 domain is found at 104–177; that stretch reads RNVDWNKLLK…KEGPQYRVNS (74 aa). The segment covering 189 to 202 has biased composition (low complexity); the sequence is PSAFPSSLPPVSLL. 2 consecutive PHD-type zinc fingers follow at residues 214 to 273 and 270 to 321; these read IPIC…CKTC and CKTC…CRPK. S356 carries the post-translational modification Phosphoserine. The disordered stretch occupies residues 361–417; it reads EGSMSAFTGRGSPGRGQKTKVSTTPSSGHAASGKHSSSRLAVTDPTRPGATTKTTTS. The segment at 362–535 is negatively regulates HAT activity; sequence GSMSAFTGRG…ECESGVEDCG (174 aa). The span at 386–395 shows a compositional bias: low complexity; that stretch reads SSGHAASGKH. Residue K491 forms a Glycyl lysine isopeptide (Lys-Gly) (interchain with G-Cter in SUMO2) linkage. In terms of domain architecture, MYST-type HAT spans 533 to 807; that stretch reads DCGRYPSVIE…LDPESLRWTP (275 aa). The segment at 536–826 is catalytic; it reads RYPSVIEFGK…EEEREAEKEA (291 aa). Residues 566 to 591 form a C2HC MYST-type zinc finger; it reads LYLCEFCLKYMKSKNILLRHSKKCGW. Residues 570–826 form an interaction with BRPF1 region; the sequence is EFCLKYMKSK…EEEREAEKEA (257 aa). K633 is modified (N6-acetyllysine; by autocatalysis). Residues 674–678 and 683–689 contribute to the acetyl-CoA site; these read SCIMI and QRQGFGR. E709 serves as the catalytic Proton donor/acceptor. Acetyl-CoA is bound at residue S713. The segment covering 846-860 has biased composition (low complexity); sequence SRVSSRQSSAKVQSK. 4 disordered regions span residues 846 to 1018, 1031 to 1252, 1283 to 1358, and 1388 to 1418; these read SRVS…NHFF, DAEH…FKDA, MSCN…DDTF, and DECQQSDHSSPVSSVHSHPGQSVRSVNSPSV. N6-acetyllysine occurs at positions 856, 860, and 862. A Phosphoserine modification is found at S866. The span at 887-909 shows a compositional bias: acidic residues; it reads SEEEEEEEEEDDEEEEEEEEEES. The span at 910–924 shows a compositional bias: polar residues; sequence IQTSPPRLTKPQSVS. Residues 925 to 944 show a composition bias toward basic residues; the sequence is IKRKRPFVVKKKRGRKRRRI. Positions 946–959 are enriched in low complexity; it reads SSVTTETISETTEV. Residues 991-1004 are compositionally biased toward basic residues; sequence PVLRKAFPHQPGKK. Composition is skewed to basic and acidic residues over residues 1031 to 1047 and 1094 to 1114; these read DAEHLKEGSKDNPEPLK and EEQKELSEDKGSPVGMEREVT. Positions 1155 to 1176 are enriched in acidic residues; sequence EEGEEEGEEEGEREEQEEEEEV. Residues 1177–1207 are compositionally biased toward basic and acidic residues; sequence TTEKDLDGAKSKENPEPEISMEKEDPVHLGD. The span at 1208–1217 shows a compositional bias: acidic residues; that stretch reads HEEDEDEEEE. Composition is skewed to basic and acidic residues over residues 1238–1252 and 1310–1320; these read NMERGDLPRETFKDA and QTQKQDQKNSD. Positions 1339 to 1349 are enriched in polar residues; it reads ETAQAVQSLTQ. The segment at 1359-1872 is interaction with RUNX1 and RUNX2; the sequence is PDCAETQEAC…QSLNGSYMRR (514 aa). Over residues 1393 to 1410 the composition is skewed to low complexity; that stretch reads SDHSSPVSSVHSHPGQSV.

The protein belongs to the MYST (SAS/MOZ) family. In terms of assembly, component of the MOZ/MORF complex composed at least of ING5, KAT6A, KAT6B, MEAF6 and one of BRPF1, BRD1/BRPF2 and BRPF3. Interacts with RUNX1 and RUNX2. In terms of processing, autoacetylation at Lys-633 is required for proper function. Ubiquitously expressed.

The protein resides in the nucleus. It carries out the reaction L-lysyl-[protein] + acetyl-CoA = N(6)-acetyl-L-lysyl-[protein] + CoA + H(+). Histone acetyltransferase which may be involved in both positive and negative regulation of transcription. Required for RUNX2-dependent transcriptional activation. Component of the MOZ/MORF complex which has a histone H3 acetyltransferase activity. Involved in cerebral cortex development. This Mus musculus (Mouse) protein is Histone acetyltransferase KAT6B (Kat6b).